Here is a 157-residue protein sequence, read N- to C-terminus: Major allergen Alt a 1 (157 aa).

Positions 1 to 18 are cleaved as a signal peptide; that stretch reads MQFTTIASLFAAAGLAAA. The AA1-like domain maps to 35–153; the sequence is EGDYVWKISE…ADAYITLVTL (119 aa). 2 disulfide bridges follow: cysteine 74-cysteine 89 and cysteine 128-cysteine 140.

It belongs to the ALTA1 family. Homodimer; disulfide-linked.

It is found in the spore wall. The protein resides in the secreted. May bind and inhibit the beta-glucanase activity of host plant thaumatin-like proteins. The protein is Major allergen Alt a 1 (ALTA1) of Alternaria alternata (Alternaria rot fungus).